Reading from the N-terminus, the 466-residue chain is Ribulose bisphosphate carboxylase large chain (466 aa).

Lysine 5 is modified (N6,N6,N6-trimethyllysine). Substrate contacts are provided by asparagine 114 and threonine 164. The active-site Proton acceptor is the lysine 166. A substrate-binding site is contributed by lysine 168. 3 residues coordinate Mg(2+): lysine 192, aspartate 194, and glutamate 195. Lysine 192 bears the N6-carboxylysine mark. The active-site Proton acceptor is histidine 285. Substrate-binding residues include arginine 286, histidine 318, and serine 370.

The protein belongs to the RuBisCO large chain family. Type I subfamily. As to quaternary structure, heterohexadecamer of 8 large chains and 8 small chains; disulfide-linked. The disulfide link is formed within the large subunit homodimers. The cofactor is Mg(2+). The disulfide bond which can form in the large chain dimeric partners within the hexadecamer appears to be associated with oxidative stress and protein turnover.

The protein localises to the plastid. It localises to the chloroplast. The catalysed reaction is 2 (2R)-3-phosphoglycerate + 2 H(+) = D-ribulose 1,5-bisphosphate + CO2 + H2O. It carries out the reaction D-ribulose 1,5-bisphosphate + O2 = 2-phosphoglycolate + (2R)-3-phosphoglycerate + 2 H(+). RuBisCO catalyzes two reactions: the carboxylation of D-ribulose 1,5-bisphosphate, the primary event in carbon dioxide fixation, as well as the oxidative fragmentation of the pentose substrate in the photorespiration process. Both reactions occur simultaneously and in competition at the same active site. This Adenium obesum (Desert rose) protein is Ribulose bisphosphate carboxylase large chain.